A 440-amino-acid polypeptide reads, in one-letter code: NADH-quinone oxidoreductase subunit D 2 (440 aa).

This sequence belongs to the complex I 49 kDa subunit family. As to quaternary structure, NDH-1 is composed of 14 different subunits. Subunits NuoB, C, D, E, F, and G constitute the peripheral sector of the complex.

It is found in the cell membrane. The catalysed reaction is a quinone + NADH + 5 H(+)(in) = a quinol + NAD(+) + 4 H(+)(out). Its function is as follows. NDH-1 shuttles electrons from NADH, via FMN and iron-sulfur (Fe-S) centers, to quinones in the respiratory chain. The immediate electron acceptor for the enzyme in this species is believed to be a menaquinone. Couples the redox reaction to proton translocation (for every two electrons transferred, four hydrogen ions are translocated across the cytoplasmic membrane), and thus conserves the redox energy in a proton gradient. This Streptomyces coelicolor (strain ATCC BAA-471 / A3(2) / M145) protein is NADH-quinone oxidoreductase subunit D 2.